The primary structure comprises 382 residues: ATP phosphoribosyltransferase regulatory subunit (382 aa).

Belongs to the class-II aminoacyl-tRNA synthetase family. HisZ subfamily. In terms of assembly, heteromultimer composed of HisG and HisZ subunits.

The protein localises to the cytoplasm. Its pathway is amino-acid biosynthesis; L-histidine biosynthesis; L-histidine from 5-phospho-alpha-D-ribose 1-diphosphate: step 1/9. Its function is as follows. Required for the first step of histidine biosynthesis. May allow the feedback regulation of ATP phosphoribosyltransferase activity by histidine. This chain is ATP phosphoribosyltransferase regulatory subunit, found in Burkholderia cenocepacia (strain ATCC BAA-245 / DSM 16553 / LMG 16656 / NCTC 13227 / J2315 / CF5610) (Burkholderia cepacia (strain J2315)).